The chain runs to 413 residues: MKCSWREGNKIQLLENGEQYYPAVFKAIGEAQERIILETFIWFEDDVGKQLHAALLAAAQRGVKAEVLLDGYGSPDLSDEFVNELTAAGVVFRYYDPRPRLFGMRTNVFRRMHRKIVVIDARIAFIGGLNYSAEHMSSYGPEAKQDYAVRLEGPIVEDILQFELENLPGQSAARRWWRRHHKAEENRQPGEAQVLLVWRDNEEHRDDIERHYLKMLTQARREVIIANAYFFPGYRFLHALRKAARRGVRIKLIIQGEPDMPIVRVGARLLYNYLVKGGVQVFEYRRRPLHGKVALMDDHWATVGSSNLDPLSLSLNLEANVIIHDRHFNQTLRDNLNGIIAADCQQVDETMLPKRTWWNLTKSVLAFHFLRHFPALVGWLPAHTPRLAQVDPPAQPTMETQDRVETENTGVKP.

PLD phosphodiesterase domains lie at Val-108–His-135 and Arg-285–Ser-312. Active-site residues include His-113, Lys-115, Asp-120, His-290, Lys-292, and Asp-297. The segment at Val-390–Pro-413 is disordered.

It belongs to the phospholipase D family. Cardiolipin synthase subfamily. ClsB sub-subfamily.

Its subcellular location is the cell membrane. The enzyme catalyses 2 a 1,2-diacyl-sn-glycero-3-phospho-(1'-sn-glycerol) = a cardiolipin + glycerol. Functionally, catalyzes the phosphatidyl group transfer from one phosphatidylglycerol molecule to another to form cardiolipin (CL) (diphosphatidylglycerol) and glycerol. This is Cardiolipin synthase B from Escherichia coli O157:H7.